A 430-amino-acid polypeptide reads, in one-letter code: Aspartate aminotransferase, mitochondrial (430 aa).

A mitochondrion-targeting transit peptide spans M1–A29. T48 carries the phosphothreonine modification. At K59 the chain carries N6-acetyllysine. A substrate-binding site is contributed by G65. An N6-acetyllysine; alternate modification is found at K73. K73 carries the post-translational modification N6-succinyllysine; alternate. An N6-acetyllysine modification is found at K82. N6-acetyllysine; alternate is present on K90. K90 bears the N6-succinyllysine; alternate mark. Y96 carries the post-translational modification 3'-nitrotyrosine; alternate. The residue at position 96 (Y96) is a Phosphotyrosine; alternate. K122 carries the post-translational modification N6-acetyllysine; alternate. N6-succinyllysine; alternate is present on K122. S143 carries the post-translational modification Phosphoserine. Residue K159 is modified to N6-acetyllysine; alternate. At K159 the chain carries N6-succinyllysine; alternate. W162 is a substrate binding site. At K185 the chain carries N6-acetyllysine; alternate. The residue at position 185 (K185) is an N6-succinyllysine; alternate. N215 contributes to the substrate binding site. An N6-succinyllysine modification is found at K227. K234 carries the N6-acetyllysine modification. N6-acetyllysine; alternate occurs at positions 279 and 296. At K279 the chain carries N6-(pyridoxal phosphate)lysine; alternate. At K296 the chain carries N6-succinyllysine; alternate. Residue K302 is modified to N6-acetyllysine. K309 is subject to N6-acetyllysine; alternate. An N6-succinyllysine; alternate modification is found at K309. R313 carries the post-translational modification Asymmetric dimethylarginine. At K338 the chain carries N6-acetyllysine; alternate. N6-succinyllysine; alternate is present on K338. Residue K345 is modified to N6-acetyllysine. Position 363 is an N6-acetyllysine; alternate (K363). K363 carries the post-translational modification N6-succinyllysine; alternate. 2 positions are modified to N6-acetyllysine: K364 and K387. K396 and K404 each carry N6-acetyllysine; alternate. 2 positions are modified to N6-succinyllysine; alternate: K396 and K404. A substrate-binding site is contributed by R407.

Belongs to the class-I pyridoxal-phosphate-dependent aminotransferase family. Homodimer. Pyridoxal 5'-phosphate is required as a cofactor.

Its subcellular location is the mitochondrion matrix. The protein localises to the cell membrane. It catalyses the reaction L-aspartate + 2-oxoglutarate = oxaloacetate + L-glutamate. The enzyme catalyses L-kynurenine + 2-oxoglutarate = kynurenate + L-glutamate + H2O. In terms of biological role, catalyzes the irreversible transamination of the L-tryptophan metabolite L-kynurenine to form kynurenic acid (KA). As a member of the malate-aspartate shuttle, it has a key role in the intracellular NAD(H) redox balance. Is important for metabolite exchange between mitochondria and cytosol, and for amino acid metabolism. Facilitates cellular uptake of long-chain free fatty acids. The protein is Aspartate aminotransferase, mitochondrial (GOT2) of Oryctolagus cuniculus (Rabbit).